The chain runs to 352 residues: Protein RecA (352 aa).

74–81 (GPESSGKT) is a binding site for ATP.

It belongs to the RecA family.

It is found in the cytoplasm. Can catalyze the hydrolysis of ATP in the presence of single-stranded DNA, the ATP-dependent uptake of single-stranded DNA by duplex DNA, and the ATP-dependent hybridization of homologous single-stranded DNAs. It interacts with LexA causing its activation and leading to its autocatalytic cleavage. The chain is Protein RecA from Ralstonia nicotianae (strain ATCC BAA-1114 / GMI1000) (Ralstonia solanacearum).